Reading from the N-terminus, the 433-residue chain is uncharacterized protein (433 aa).

The signal sequence occupies residues 1-28 (MKICGLEKFRVFLSLISMVSLLCNGVNG). At 29 to 274 (FTIVRSMAVN…QAELEPKKTG (246 aa)) the chain is on the extracellular side. Residues 235–250 (GENANPTANSGTSARS) show a composition bias toward polar residues. The tract at residues 235 to 266 (GENANPTANSGTSARSNRNEQNKMEEPARNQA) is disordered. Basic and acidic residues predominate over residues 251–266 (NRNEQNKMEEPARNQA). The helical transmembrane segment at 275-295 (VVVAGVTVSLAAGFVLALATL) threads the bilayer. Residues 296–433 (LLMKKKQTSL…HDKGTDEDKG (138 aa)) lie on the Cytoplasmic side of the membrane. Disordered regions lie at residues 320 to 340 (EEPV…PSFD) and 413 to 433 (KVIE…EDKG).

In terms of tissue distribution, component of the acid-insoluble and acid-soluble organic matrix of the aragonitic skeleton (at protein level).

It is found in the membrane. This is an uncharacterized protein from Acropora millepora (Staghorn coral).